A 190-amino-acid polypeptide reads, in one-letter code: Dense granule protein 1 (190 aa).

An N-terminal signal peptide occupies residues 1–24 (MVRVSAIVGAAASVFVCLSAGAYA). N30 carries N-linked (GlcNAc...) asparagine glycosylation.

It localises to the secreted. The protein is Dense granule protein 1 (GRA1) of Toxoplasma gondii.